The sequence spans 118 residues: MKKSYRVKKEKEFQQVFNKKQSCANRRFVVYVLEKPQQAHFRVGISVGKKIGNAVTRNAVKRKIRASLFQLKDRISPEIDFIVIARPGLEKLSSEEVKANLTHVLNLAKILDVREGIE.

It belongs to the RnpA family. In terms of assembly, consists of a catalytic RNA component (M1 or rnpB) and a protein subunit.

It catalyses the reaction Endonucleolytic cleavage of RNA, removing 5'-extranucleotides from tRNA precursor.. Its function is as follows. RNaseP catalyzes the removal of the 5'-leader sequence from pre-tRNA to produce the mature 5'-terminus. It can also cleave other RNA substrates such as 4.5S RNA. The protein component plays an auxiliary but essential role in vivo by binding to the 5'-leader sequence and broadening the substrate specificity of the ribozyme. The sequence is that of Ribonuclease P protein component from Enterococcus faecalis (strain ATCC 700802 / V583).